The sequence spans 186 residues: Peptidyl-tRNA hydrolase (186 aa).

A tRNA-binding site is contributed by tyrosine 15. Histidine 20 serves as the catalytic Proton acceptor. TRNA contacts are provided by tyrosine 64, asparagine 66, and asparagine 112.

It belongs to the PTH family. Monomer.

The protein resides in the cytoplasm. The catalysed reaction is an N-acyl-L-alpha-aminoacyl-tRNA + H2O = an N-acyl-L-amino acid + a tRNA + H(+). Functionally, hydrolyzes ribosome-free peptidyl-tRNAs (with 1 or more amino acids incorporated), which drop off the ribosome during protein synthesis, or as a result of ribosome stalling. In terms of biological role, catalyzes the release of premature peptidyl moieties from peptidyl-tRNA molecules trapped in stalled 50S ribosomal subunits, and thus maintains levels of free tRNAs and 50S ribosomes. The polypeptide is Peptidyl-tRNA hydrolase (Azobacteroides pseudotrichonymphae genomovar. CFP2).